The sequence spans 349 residues: S-adenosylmethionine:tRNA ribosyltransferase-isomerase (349 aa).

The protein belongs to the QueA family. In terms of assembly, monomer.

Its subcellular location is the cytoplasm. It catalyses the reaction 7-aminomethyl-7-carbaguanosine(34) in tRNA + S-adenosyl-L-methionine = epoxyqueuosine(34) in tRNA + adenine + L-methionine + 2 H(+). The protein operates within tRNA modification; tRNA-queuosine biosynthesis. Transfers and isomerizes the ribose moiety from AdoMet to the 7-aminomethyl group of 7-deazaguanine (preQ1-tRNA) to give epoxyqueuosine (oQ-tRNA). In Pseudomonas entomophila (strain L48), this protein is S-adenosylmethionine:tRNA ribosyltransferase-isomerase.